The sequence spans 257 residues: Thiazole synthase (257 aa).

The Schiff-base intermediate with DXP role is filled by K96. Residues G157, A184–G185, and N206–T207 each bind 1-deoxy-D-xylulose 5-phosphate.

It belongs to the ThiG family. In terms of assembly, homotetramer. Forms heterodimers with either ThiH or ThiS.

It localises to the cytoplasm. It carries out the reaction [ThiS sulfur-carrier protein]-C-terminal-Gly-aminoethanethioate + 2-iminoacetate + 1-deoxy-D-xylulose 5-phosphate = [ThiS sulfur-carrier protein]-C-terminal Gly-Gly + 2-[(2R,5Z)-2-carboxy-4-methylthiazol-5(2H)-ylidene]ethyl phosphate + 2 H2O + H(+). It functions in the pathway cofactor biosynthesis; thiamine diphosphate biosynthesis. Its function is as follows. Catalyzes the rearrangement of 1-deoxy-D-xylulose 5-phosphate (DXP) to produce the thiazole phosphate moiety of thiamine. Sulfur is provided by the thiocarboxylate moiety of the carrier protein ThiS. In vitro, sulfur can be provided by H(2)S. This Agrobacterium fabrum (strain C58 / ATCC 33970) (Agrobacterium tumefaciens (strain C58)) protein is Thiazole synthase.